Reading from the N-terminus, the 484-residue chain is Acetaldehyde dehydrogenase (acetylating) (484 aa).

Belongs to the aldehyde dehydrogenase family.

The catalysed reaction is acetaldehyde + NAD(+) + CoA = acetyl-CoA + NADH + H(+). Its pathway is organosulfur degradation; alkanesulfonate degradation. Its function is as follows. Involved in an anaerobic respiration pathway that converts the sulfonate taurine (2-aminoethanesulfonate) to ammonia, acetate and sulfide. Catalyzes the oxidation of acetaldehyde to acetyl-CoA in the presence of CoASH and NAD(+). Highly prefers NAD(+) over NADP(+). In Bilophila wadsworthia (strain 3_1_6), this protein is Acetaldehyde dehydrogenase (acetylating).